The primary structure comprises 264 residues: S-adenosylmethionine decarboxylase proenzyme (264 aa).

Residue serine 112 is the Schiff-base intermediate with substrate; via pyruvic acid of the active site. Serine 112 bears the Pyruvic acid (Ser); by autocatalysis mark. The active-site Proton acceptor; for processing activity is the histidine 117. Catalysis depends on cysteine 140, which acts as the Proton donor; for catalytic activity.

This sequence belongs to the prokaryotic AdoMetDC family. Type 2 subfamily. Heterooctamer of four alpha and four beta chains arranged as a tetramer of alpha/beta heterodimers. It depends on pyruvate as a cofactor. Is synthesized initially as an inactive proenzyme. Formation of the active enzyme involves a self-maturation process in which the active site pyruvoyl group is generated from an internal serine residue via an autocatalytic post-translational modification. Two non-identical subunits are generated from the proenzyme in this reaction, and the pyruvate is formed at the N-terminus of the alpha chain, which is derived from the carboxyl end of the proenzyme. The post-translation cleavage follows an unusual pathway, termed non-hydrolytic serinolysis, in which the side chain hydroxyl group of the serine supplies its oxygen atom to form the C-terminus of the beta chain, while the remainder of the serine residue undergoes an oxidative deamination to produce ammonia and the pyruvoyl group blocking the N-terminus of the alpha chain.

It carries out the reaction S-adenosyl-L-methionine + H(+) = S-adenosyl 3-(methylsulfanyl)propylamine + CO2. It participates in amine and polyamine biosynthesis; S-adenosylmethioninamine biosynthesis; S-adenosylmethioninamine from S-adenosyl-L-methionine: step 1/1. Catalyzes the decarboxylation of S-adenosylmethionine to S-adenosylmethioninamine (dcAdoMet), the propylamine donor required for the synthesis of the polyamines spermine and spermidine from the diamine putrescine. The chain is S-adenosylmethionine decarboxylase proenzyme from Sodalis glossinidius (strain morsitans).